We begin with the raw amino-acid sequence, 190 residues long: Imidazole glycerol phosphate synthase subunit HisH (190 aa).

In terms of domain architecture, Glutamine amidotransferase type-1 spans 2–190 (IVGVVDYTVG…IKRFLAVAKR (189 aa)). Catalysis depends on C73, which acts as the Nucleophile. Residues H169 and E171 contribute to the active site.

As to quaternary structure, heterodimer of HisH and HisF.

The protein resides in the cytoplasm. It catalyses the reaction 5-[(5-phospho-1-deoxy-D-ribulos-1-ylimino)methylamino]-1-(5-phospho-beta-D-ribosyl)imidazole-4-carboxamide + L-glutamine = D-erythro-1-(imidazol-4-yl)glycerol 3-phosphate + 5-amino-1-(5-phospho-beta-D-ribosyl)imidazole-4-carboxamide + L-glutamate + H(+). The catalysed reaction is L-glutamine + H2O = L-glutamate + NH4(+). It functions in the pathway amino-acid biosynthesis; L-histidine biosynthesis; L-histidine from 5-phospho-alpha-D-ribose 1-diphosphate: step 5/9. Functionally, IGPS catalyzes the conversion of PRFAR and glutamine to IGP, AICAR and glutamate. The HisH subunit catalyzes the hydrolysis of glutamine to glutamate and ammonia as part of the synthesis of IGP and AICAR. The resulting ammonia molecule is channeled to the active site of HisF. This is Imidazole glycerol phosphate synthase subunit HisH from Pyrobaculum aerophilum (strain ATCC 51768 / DSM 7523 / JCM 9630 / CIP 104966 / NBRC 100827 / IM2).